We begin with the raw amino-acid sequence, 537 residues long: Oocyte zinc finger protein XlCOF29 (537 aa).

Residues 1–21 are disordered; the sequence is MGMSEKASDTGMKGKKKDKNE. 6 consecutive C2H2-type zinc fingers follow at residues 375 to 397, 403 to 425, 431 to 453, 459 to 481, 487 to 509, and 515 to 537; these read FTCSECGKTYTRLYNLKIHLKSH, FSCSECEECFTDHTDLVIHRRLH, FPCAECGKCFTNCTNLRAHSKTH, YSCTECGKTFRDRSHLNIHKKRH, YTCSECGKCFAYRSNLMVHVRIH, and FSCSKCGKCFTDHANLIVHERMH.

The protein belongs to the krueppel C2H2-type zinc-finger protein family.

Its subcellular location is the nucleus. May be involved in transcriptional regulation. The polypeptide is Oocyte zinc finger protein XlCOF29 (Xenopus laevis (African clawed frog)).